We begin with the raw amino-acid sequence, 391 residues long: Terminal nucleotidyltransferase 5C (391 aa).

It belongs to the TENT family. As to quaternary structure, interacts with BCCIP and PABPC1; the interaction has no effect on TENT5C poly(A) polymerase function. Interacts with PLK4; this interaction leads to the TENT5C recruitment into the centrosome. In terms of tissue distribution, expressed by splenocytes, expression is increased in activated splenocytes.

The protein resides in the nucleus. Its subcellular location is the cytoplasm. The protein localises to the cytoskeleton. It is found in the microtubule organizing center. It localises to the centrosome. It carries out the reaction RNA(n) + ATP = RNA(n)-3'-adenine ribonucleotide + diphosphate. Its function is as follows. Catalyzes the transfer of one adenosine molecule from an ATP to an mRNA poly(A) tail bearing a 3'-OH terminal group and enhances mRNA stability and gene expression. Can also elongate RNA oligos ending with uridine molecule, provided that the sequence is adenosine-rich. Mainly targets mRNAs encoding endoplasmic reticulum-targeted protein. The polypeptide is Terminal nucleotidyltransferase 5C (Mus musculus (Mouse)).